The primary structure comprises 432 residues: D-amino acid dehydrogenase (432 aa).

3-17 (VLVLGSGVIGTASAY) is a binding site for FAD.

Belongs to the DadA oxidoreductase family. The cofactor is FAD.

It catalyses the reaction a D-alpha-amino acid + A + H2O = a 2-oxocarboxylate + AH2 + NH4(+). The protein operates within amino-acid degradation; D-alanine degradation; NH(3) and pyruvate from D-alanine: step 1/1. In terms of biological role, oxidative deamination of D-amino acids. The polypeptide is D-amino acid dehydrogenase (Ectopseudomonas mendocina (strain ymp) (Pseudomonas mendocina)).